Here is a 578-residue protein sequence, read N- to C-terminus: Sulfite reductase [NADPH] hemoprotein beta-component (578 aa).

[4Fe-4S] cluster-binding residues include cysteine 441, cysteine 447, cysteine 487, and cysteine 491. Residue cysteine 491 participates in siroheme binding.

The protein belongs to the nitrite and sulfite reductase 4Fe-4S domain family. As to quaternary structure, alpha(8)-beta(8). The alpha component is a flavoprotein, the beta component is a hemoprotein. Siroheme serves as cofactor. The cofactor is [4Fe-4S] cluster.

The catalysed reaction is hydrogen sulfide + 3 NADP(+) + 3 H2O = sulfite + 3 NADPH + 4 H(+). Its pathway is sulfur metabolism; hydrogen sulfide biosynthesis; hydrogen sulfide from sulfite (NADPH route): step 1/1. Its function is as follows. Component of the sulfite reductase complex that catalyzes the 6-electron reduction of sulfite to sulfide. This is one of several activities required for the biosynthesis of L-cysteine from sulfate. The polypeptide is Sulfite reductase [NADPH] hemoprotein beta-component (Vibrio vulnificus (strain YJ016)).